The sequence spans 167 residues: MPFLALELKCQLKGITDLRPDDTDSFHWHMKLKCTNCGEAPDHWQYVVLNEMLDVPGSRGEANLVEKCKLCGRVNTLTIVEDMFKSYNIEQNEKWQQIAVFDCRGLEPFDFDPRDEWIAKSVETGNAFHEIDLSEKEWVDFDDKAMEAVEISEMSSQFTTIRDPKKK.

4 residues coordinate Zn(2+): Cys34, Cys37, Cys68, and Cys71.

Belongs to the UPF0587 family.

The protein is UPF0587 protein F46B6.12 of Caenorhabditis elegans.